Here is a 554-residue protein sequence, read N- to C-terminus: CTP synthase (554 aa).

An amidoligase domain region spans residues 1–265; the sequence is MTPLIFVTGG…DEIVIDQFKL (265 aa). Position 13 (serine 13) interacts with CTP. UTP is bound at residue serine 13. ATP-binding positions include 14-19 and aspartate 71; that span reads SLGKGI. 2 residues coordinate Mg(2+): aspartate 71 and glutamate 139. Residues 146-148, 186-191, and lysine 222 each bind CTP; these read DIE and KTKPTQ. Residues 186 to 191 and lysine 222 contribute to the UTP site; that span reads KTKPTQ. The Glutamine amidotransferase type-1 domain occupies 292-545; the sequence is TIAVVGKYVD…VKASRARKAG (254 aa). Glycine 353 lines the L-glutamine pocket. Cysteine 380 functions as the Nucleophile; for glutamine hydrolysis in the catalytic mechanism. L-glutamine is bound by residues 381–384, glutamate 404, and arginine 471; that span reads YGMQ. Active-site residues include histidine 518 and glutamate 520.

Belongs to the CTP synthase family. Homotetramer.

It catalyses the reaction UTP + L-glutamine + ATP + H2O = CTP + L-glutamate + ADP + phosphate + 2 H(+). The enzyme catalyses L-glutamine + H2O = L-glutamate + NH4(+). The catalysed reaction is UTP + NH4(+) + ATP = CTP + ADP + phosphate + 2 H(+). The protein operates within pyrimidine metabolism; CTP biosynthesis via de novo pathway; CTP from UDP: step 2/2. With respect to regulation, allosterically activated by GTP, when glutamine is the substrate; GTP has no effect on the reaction when ammonia is the substrate. The allosteric effector GTP functions by stabilizing the protein conformation that binds the tetrahedral intermediate(s) formed during glutamine hydrolysis. Inhibited by the product CTP, via allosteric rather than competitive inhibition. In terms of biological role, catalyzes the ATP-dependent amination of UTP to CTP with either L-glutamine or ammonia as the source of nitrogen. Regulates intracellular CTP levels through interactions with the four ribonucleotide triphosphates. This chain is CTP synthase, found in Xylella fastidiosa (strain M12).